The following is an 87-amino-acid chain: Large ribosomal subunit protein bL27 (87 aa).

Positions 1–24 (MATKKAGGSSRNGRDSAGRRLGVK) are disordered.

This sequence belongs to the bacterial ribosomal protein bL27 family.

The chain is Large ribosomal subunit protein bL27 from Rickettsia massiliae (strain Mtu5).